A 106-amino-acid polypeptide reads, in one-letter code: Transcriptional and immune response regulator (106 aa).

As to quaternary structure, monomer. Interacts with NOTCH2 (via ANK repeats), the interaction inhibits the nuclear translocation of NOTCH2 N2ICD. Interacts (C-terminus) with CBY1 (C-terminus), TCIM competes with CTNNB1 for the interaction with CBY1.

The protein localises to the cytoplasm. Its subcellular location is the nucleus. It localises to the nucleolus. The protein resides in the nucleus speckle. Functionally, seems to be involved in the regulation of cell growth an differentiation, may play different and opposite roles depending on the tissue or cell type. May enhance the WNT-CTNNB1 pathway by relieving antagonistic activity of CBY1. Enhances the proliferation of follicular dendritic cells. Plays a role in the mitogen-activated MAPK2/3 signaling pathway, positively regulates G1-to-S-phase transition of the cell cycle. In endothelial cells, enhances key inflammatory mediators and inflammatory response through the modulation of NF-kappaB transcriptional regulatory activity. Involved in the regulation of heat shock response, seems to play a positive feedback with HSF1 to modulate heat-shock downstream gene expression. Plays a role in the regulation of hematopoiesis even if the mechanisms are unknown. In cancers such as thyroid or lung cancer, it has been described as promoter of cell proliferation, G1-to-S-phase transition and inhibitor of apoptosis. However, it negatively regulates self-renewal of liver cancer cells via suppresion of NOTCH2 signaling. The protein is Transcriptional and immune response regulator (TCIM) of Bos taurus (Bovine).